Reading from the N-terminus, the 148-residue chain is Large ribosomal subunit protein bL28c (148 aa).

The N-terminal 71 residues, 1-71 (MAASGMLISN…PLKPSLQPVA (71 aa)), are a transit peptide targeting the chloroplast.

In terms of assembly, component of the chloroplast large ribosomal subunit (LSU). Mature 70S chloroplast ribosomes of higher plants consist of a small (30S) and a large (50S) subunit. The 30S small subunit contains 1 molecule of ribosomal RNA (16S rRNA) and 24 different proteins. The 50S large subunit contains 3 rRNA molecules (23S, 5S and 4.5S rRNA) and 33 different proteins.

It localises to the plastid. The protein resides in the chloroplast. Functionally, component of the chloroplast ribosome (chloro-ribosome), a dedicated translation machinery responsible for the synthesis of chloroplast genome-encoded proteins, including proteins of the transcription and translation machinery and components of the photosynthetic apparatus. This Spinacia oleracea (Spinach) protein is Large ribosomal subunit protein bL28c (RPL28).